A 144-amino-acid polypeptide reads, in one-letter code: Large ribosomal subunit protein uL11 (144 aa).

The protein belongs to the universal ribosomal protein uL11 family. As to quaternary structure, part of the ribosomal stalk of the 50S ribosomal subunit. Interacts with L10 and the large rRNA to form the base of the stalk. L10 forms an elongated spine to which L12 dimers bind in a sequential fashion forming a multimeric L10(L12)X complex. In terms of processing, one or more lysine residues are methylated.

Functionally, forms part of the ribosomal stalk which helps the ribosome interact with GTP-bound translation factors. The protein is Large ribosomal subunit protein uL11 of Rhodococcus erythropolis (strain PR4 / NBRC 100887).